We begin with the raw amino-acid sequence, 1709 residues long: Protein SHORTAGE IN CHIASMATA 1 homolog (1709 aa).

Composition is skewed to basic and acidic residues over residues 532–542 (PKLQDEDKHSD), 552–568 (DPQKLEATQKCEQEGGT), and 1601–1613 (ESFRYRGDRDTPS). Disordered stretches follow at residues 532–586 (PKLQ…SSFP) and 1566–1662 (KRKA…DPTW).

This sequence belongs to the XPF family. Interacts (via C-terminus) with PTD. Interacts with ZIP4. As to expression, highly expressed in anthers and pistil during meiosis. Expressed in pollen mother cells (PMCs) during meiosis. Expressed at low levels in roots, shoots, leaves, flowers, and glumes.

The protein resides in the chromosome. Its subcellular location is the nucleus. It is found in the cytoplasm. The protein localises to the cell membrane. Its function is as follows. Essential for normal crossover (CO) formation during meiosis. Essential component for the formation of class I meiotic COs. Interacts with PTD, another meiotic component, to regulate CO formation, possibly by stabilizing the recombination intermediates during meiosis. SHOC1 and PTD may form transient heterotrimeric or heterotetrameric complexes with HEI10 and/or ZIP4 to promote class I COs formation. Does not seem to be involved in early meiotic recombination steps involving double-strand break (DSB) formation, processing, and single-strand invasion. Does not seem to be involved in homologous pairing or synaptonemal complex (SC) assembly. The protein is Protein SHORTAGE IN CHIASMATA 1 homolog of Oryza sativa subsp. japonica (Rice).